Here is a 516-residue protein sequence, read N- to C-terminus: Importin subunit alpha-B (516 aa).

A compositionally biased stretch (basic and acidic residues) spans 1–29; it reads MQRSKQETRKSQYKKSIDSDESRRKREEA. Positions 1–54 are disordered; the sequence is MQRSKQETRKSQYKKSIDSDESRRKREEASLSIRKNKREESLLKKRTQAVPGST. The IBB domain occupies 1–55; the sequence is MQRSKQETRKSQYKKSIDSDESRRKREEASLSIRKNKREESLLKKRTQAVPGSTP. ARM repeat units follow at residues 55–96, 100–140, 143–182, 185–227, 229–268, 271–310, 313–352, 355–394, and 398–437; these read PVKV…KLLS, SPPI…NIAS, PEQT…NIAG, HYCR…NFCR, KPQP…YLSD, NERI…NIVT, DNQT…NITA, KNQI…NATS, and PQQI…NILV. The interval 490 to 516 is disordered; sequence EQEDEGDLMPEGSSFSFSNQTNSNFNL. Residues 502 to 516 show a composition bias toward low complexity; it reads SSFSFSNQTNSNFNL.

The protein belongs to the importin alpha family. In terms of assembly, forms a complex with tnpo/importin subunit beta.

It is found in the cytoplasm. Its subcellular location is the nucleus envelope. Functionally, functions in nuclear protein import via a substrate-importin alpha-beta transport complex that passes though the nuclear pore complexes (NPC). Binds specifically and directly to substrates containing either a simple or bipartite NLS motif. This chain is Importin subunit alpha-B, found in Dictyostelium discoideum (Social amoeba).